The primary structure comprises 338 residues: uncharacterized protein (338 aa).

An N-terminal signal peptide occupies residues 1–29 (MIKQLCKNITICTLALSTTFTVLPATSFA).

Belongs to the aerolysin family.

This is an uncharacterized protein from Staphylococcus aureus (strain USA300).